A 160-amino-acid chain; its full sequence is SsrA-binding protein (160 aa).

This sequence belongs to the SmpB family.

The protein resides in the cytoplasm. Its function is as follows. Required for rescue of stalled ribosomes mediated by trans-translation. Binds to transfer-messenger RNA (tmRNA), required for stable association of tmRNA with ribosomes. tmRNA and SmpB together mimic tRNA shape, replacing the anticodon stem-loop with SmpB. tmRNA is encoded by the ssrA gene; the 2 termini fold to resemble tRNA(Ala) and it encodes a 'tag peptide', a short internal open reading frame. During trans-translation Ala-aminoacylated tmRNA acts like a tRNA, entering the A-site of stalled ribosomes, displacing the stalled mRNA. The ribosome then switches to translate the ORF on the tmRNA; the nascent peptide is terminated with the 'tag peptide' encoded by the tmRNA and targeted for degradation. The ribosome is freed to recommence translation, which seems to be the essential function of trans-translation. The chain is SsrA-binding protein from Salmonella agona (strain SL483).